The chain runs to 226 residues: Orotidine 5'-phosphate decarboxylase (226 aa).

Substrate contacts are provided by residues Asp-9, Lys-31, 58-67 (DLKLYDIPNT), Thr-115, Arg-176, Gln-184, Gly-204, and Arg-205. Catalysis depends on Lys-60, which acts as the Proton donor.

Belongs to the OMP decarboxylase family. Type 1 subfamily. As to quaternary structure, homodimer.

The catalysed reaction is orotidine 5'-phosphate + H(+) = UMP + CO2. It participates in pyrimidine metabolism; UMP biosynthesis via de novo pathway; UMP from orotate: step 2/2. Functionally, catalyzes the decarboxylation of orotidine 5'-monophosphate (OMP) to uridine 5'-monophosphate (UMP). This chain is Orotidine 5'-phosphate decarboxylase, found in Wolbachia pipientis subsp. Culex pipiens (strain wPip).